The chain runs to 104 residues: Thioredoxin (104 aa).

Residues 2–104 (AIVKVTDSNF…NLAEVIEKHL (103 aa)) form the Thioredoxin domain. A disulfide bridge connects residues C29 and C32.

The protein belongs to the thioredoxin family.

In terms of biological role, component of the thioredoxin-thioredoxin reductase system. Participates in various redox reactions through the reversible oxidation of its active center dithiol to a disulfide and catalyzes dithiol-disulfide exchange reactions. The protein is Thioredoxin (trxA) of Staphylococcus saprophyticus subsp. saprophyticus (strain ATCC 15305 / DSM 20229 / NCIMB 8711 / NCTC 7292 / S-41).